A 360-amino-acid polypeptide reads, in one-letter code: mRNA cap guanine-N(7) methyltransferase (360 aa).

The interval 1–62 (MSSSNSRVHE…NRHENNGNAQ (62 aa)) is disordered. Over residues 7–19 (RVHEEQPPTENRR) the composition is skewed to basic and acidic residues. Residues 83-358 (SPIIQLKRFN…FYLAFAFEKR (276 aa)) enclose the mRNA cap 0 methyltransferase domain. 92-93 (NN) lines the mRNA pocket. S-adenosyl-L-methionine is bound by residues Lys-96, Gly-118, Asp-140, Asp-168, Gln-191, and Tyr-196.

This sequence belongs to the class I-like SAM-binding methyltransferase superfamily. mRNA cap 0 methyltransferase family. In terms of assembly, interacts with cdk9.

The protein localises to the nucleus. It catalyses the reaction a 5'-end (5'-triphosphoguanosine)-ribonucleoside in mRNA + S-adenosyl-L-methionine = a 5'-end (N(7)-methyl 5'-triphosphoguanosine)-ribonucleoside in mRNA + S-adenosyl-L-homocysteine. Its function is as follows. Responsible for methylating the 5'-cap structure of mRNAs. The chain is mRNA cap guanine-N(7) methyltransferase (pcm1) from Schizosaccharomyces pombe (strain 972 / ATCC 24843) (Fission yeast).